We begin with the raw amino-acid sequence, 123 residues long: UPF0102 protein CLD_2200 (123 aa).

It belongs to the UPF0102 family.

The polypeptide is UPF0102 protein CLD_2200 (Clostridium botulinum (strain Okra / Type B1)).